A 383-amino-acid polypeptide reads, in one-letter code: Queuine tRNA-ribosyltransferase (383 aa).

Asp-95 serves as the catalytic Proton acceptor. Substrate contacts are provided by residues 95–99 (DSGGF), Asp-149, Gln-195, and Gly-222. The tract at residues 253–259 (GVGSPDS) is RNA binding. The Nucleophile role is filled by Asp-272. Residues 277 to 281 (TRIAR) are RNA binding; important for wobble base 34 recognition. Zn(2+) contacts are provided by Cys-310, Cys-312, Cys-315, and His-341.

Belongs to the queuine tRNA-ribosyltransferase family. In terms of assembly, homodimer. Within each dimer, one monomer is responsible for RNA recognition and catalysis, while the other monomer binds to the replacement base PreQ1. It depends on Zn(2+) as a cofactor.

The catalysed reaction is 7-aminomethyl-7-carbaguanine + guanosine(34) in tRNA = 7-aminomethyl-7-carbaguanosine(34) in tRNA + guanine. It functions in the pathway tRNA modification; tRNA-queuosine biosynthesis. Catalyzes the base-exchange of a guanine (G) residue with the queuine precursor 7-aminomethyl-7-deazaguanine (PreQ1) at position 34 (anticodon wobble position) in tRNAs with GU(N) anticodons (tRNA-Asp, -Asn, -His and -Tyr). Catalysis occurs through a double-displacement mechanism. The nucleophile active site attacks the C1' of nucleotide 34 to detach the guanine base from the RNA, forming a covalent enzyme-RNA intermediate. The proton acceptor active site deprotonates the incoming PreQ1, allowing a nucleophilic attack on the C1' of the ribose to form the product. After dissociation, two additional enzymatic reactions on the tRNA convert PreQ1 to queuine (Q), resulting in the hypermodified nucleoside queuosine (7-(((4,5-cis-dihydroxy-2-cyclopenten-1-yl)amino)methyl)-7-deazaguanosine). The protein is Queuine tRNA-ribosyltransferase of Shouchella clausii (strain KSM-K16) (Alkalihalobacillus clausii).